A 119-amino-acid polypeptide reads, in one-letter code: Ribonuclease P protein component (119 aa).

Belongs to the RnpA family. As to quaternary structure, consists of a catalytic RNA component (M1 or rnpB) and a protein subunit.

The enzyme catalyses Endonucleolytic cleavage of RNA, removing 5'-extranucleotides from tRNA precursor.. In terms of biological role, RNaseP catalyzes the removal of the 5'-leader sequence from pre-tRNA to produce the mature 5'-terminus. It can also cleave other RNA substrates such as 4.5S RNA. The protein component plays an auxiliary but essential role in vivo by binding to the 5'-leader sequence and broadening the substrate specificity of the ribozyme. The protein is Ribonuclease P protein component of Streptococcus pyogenes serotype M12 (strain MGAS2096).